The chain runs to 472 residues: Clampless protein 1 (472 aa).

N-linked (GlcNAc...) asparagine glycosylation is found at N70 and N296.

Required for developmental progression after cells of opposite mating types fuse with one another, essential for processes common to both dikaryotic filament formation and monokaryotic fruiting. A direct target for transcription factors Sxi1-alpha and Sxi2-a. In Cryptococcus neoformans var. neoformans serotype D (strain B-3501A) (Filobasidiella neoformans), this protein is Clampless protein 1.